A 115-amino-acid chain; its full sequence is Ribonuclease P protein component (115 aa).

This sequence belongs to the RnpA family. Consists of a catalytic RNA component (M1 or rnpB) and a protein subunit.

It carries out the reaction Endonucleolytic cleavage of RNA, removing 5'-extranucleotides from tRNA precursor.. In terms of biological role, RNaseP catalyzes the removal of the 5'-leader sequence from pre-tRNA to produce the mature 5'-terminus. It can also cleave other RNA substrates such as 4.5S RNA. The protein component plays an auxiliary but essential role in vivo by binding to the 5'-leader sequence and broadening the substrate specificity of the ribozyme. This Baumannia cicadellinicola subsp. Homalodisca coagulata protein is Ribonuclease P protein component.